Consider the following 394-residue polypeptide: Putative FNIP repeat-containing protein R636 (394 aa).

FNIP repeat units lie at residues 126 to 167, 168 to 207, and 210 to 250; these read FNKS…FSVY, FDQP…LYFG, and FNQP…IFEA.

This Acanthamoeba polyphaga mimivirus (APMV) protein is Putative FNIP repeat-containing protein R636.